The sequence spans 71 residues: Brevinin-1SN1 (71 aa).

An N-terminal signal peptide occupies residues 1–22 (MFTMKKPLLLLFFLGTINLSLC). Positions 23–45 (EEERNADEEEKRDGDDEMDAEVE) are cleaved as a propeptide — removed in mature form. The cysteines at positions 65 and 71 are disulfide-linked.

Belongs to the frog skin active peptide (FSAP) family. Brevinin subfamily. Expressed by the skin glands.

It localises to the secreted. In terms of biological role, antimicrobial peptide. Active against some Gram-negative and a variety of Gram-positive bacterial strains. Active against fungus C.glabrata 090902 but not against C.albicans ATCC 10231. Shows hemolytic activity against human erythrocytes. This Sylvirana spinulosa (Fine-spined frog) protein is Brevinin-1SN1.